The primary structure comprises 218 residues: UPF0502 protein Mmwyl1_3509 (218 aa).

Belongs to the UPF0502 family.

This chain is UPF0502 protein Mmwyl1_3509, found in Marinomonas sp. (strain MWYL1).